Here is a 128-residue protein sequence, read N- to C-terminus: Sirohydrochlorin cobaltochelatase (128 aa).

Catalysis depends on His9, which acts as the Proton acceptor. His9 is a binding site for Co(2+). Substrate is bound by residues Lys43 and 68–73; that span reads FATGTH. Co(2+) is bound at residue His73.

It belongs to the CbiX family. CbiXS subfamily. In terms of assembly, homotetramer; dimer of dimers.

The enzyme catalyses Co-sirohydrochlorin + 2 H(+) = sirohydrochlorin + Co(2+). It functions in the pathway cofactor biosynthesis; adenosylcobalamin biosynthesis; cob(II)yrinate a,c-diamide from sirohydrochlorin (anaerobic route): step 1/10. Catalyzes the insertion of Co(2+) into sirohydrochlorin as part of the anaerobic pathway to cobalamin biosynthesis. This Saccharolobus islandicus (strain Y.N.15.51 / Yellowstone #2) (Sulfolobus islandicus) protein is Sirohydrochlorin cobaltochelatase.